A 1347-amino-acid polypeptide reads, in one-letter code: Protocadherin-11 X-linked (1347 aa).

The N-terminal stretch at 1 to 23 (MDLLSGTYIFAVLLACVVFHSGA) is a signal peptide. Residues 24–812 (QEKNYTIREE…VSSPTSDYVK (789 aa)) are Extracellular-facing. 7 Cadherin domains span residues 26–139 (KNYT…APLF), 140–249 (PATV…HPVF), 250–355 (KETE…VPSI), 362–466 (NPVN…APVF), 467–570 (TQSF…SPVF), 571–673 (THNE…KPVF), and 677–795 (PSNY…APVT). Residues Asn27, Asn48, and Asn54 are each glycosylated (N-linked (GlcNAc...) asparagine). Asn344 carries an N-linked (GlcNAc...) asparagine glycan. N-linked (GlcNAc...) asparagine glycosylation is present at Asn553. N-linked (GlcNAc...) asparagine glycosylation is present at Asn773. Residues 813-833 (ILVAAVAGTITVVVVIFITAV) form a helical membrane-spanning segment. The Cytoplasmic segment spans residues 834–1347 (VRCRQAPHLK…DSPVMEEHPL (514 aa)). Disordered stretches follow at residues 1057 to 1091 (LPEG…GYPQ), 1097 to 1116 (RATP…ESTF), and 1325 to 1347 (TFTP…EHPL).

The protein localises to the cell membrane. Its function is as follows. Potential calcium-dependent cell-adhesion protein. The protein is Protocadherin-11 X-linked (PCDH11X) of Pan troglodytes (Chimpanzee).